Here is a 325-residue protein sequence, read N- to C-terminus: MKLENFYVKDDASTDESYGCYPTKRPMEEYIRKGLVCIDKPMGPSSHEVVVWVRRILNVSKTGHAGTLDPRVTGVLPIFIENATKMVKFLQESSKEYVCLMRLHGDAKREDVEKVMKLFVGRIYQRPPLKSAVKKVLRIREIYEMELLEMEGRDVLFRVVTESGTYIRKLCRDIGEVLGTGAHMQELRRTRTGKFGEDMCYTLQDLLDAYVFWKEEGEEKYLREIIKPMEVAAAELPKIVIKDSAVDAICHGANLSVRGVAYVEKNVKKDSTVAIFTLKNELVAIGRALMDAEDIYRLKKGIAADIQRVMMERGVYPKVWKSSSD.

Asp-69 functions as the Nucleophile in the catalytic mechanism. A PUA domain is found at 236–311; it reads LPKIVIKDSA…IAADIQRVMM (76 aa).

It belongs to the pseudouridine synthase TruB family. Type 2 subfamily.

It carries out the reaction uridine(55) in tRNA = pseudouridine(55) in tRNA. Could be responsible for synthesis of pseudouridine from uracil-55 in the psi GC loop of transfer RNAs. The chain is Probable tRNA pseudouridine synthase B from Archaeoglobus fulgidus (strain ATCC 49558 / DSM 4304 / JCM 9628 / NBRC 100126 / VC-16).